The primary structure comprises 352 residues: MESLRGQEQIWQLMFSFVDSMALKCAIELRIADIIHSHGKPITLSQIASGIRSNSNSSISPNIPYLSRIMRFLVRKNIFTEHQEDNDEVISLYGLSDSSRWLLRDFKSSLAPMVLMQTHPLSMAVWHFLEDYVRNSSNTFEKAHGCNIWEFSSANPDFNKIFNNAMASIVPIYMGAVLSSYKDGLGCIKGTVVDVGGGTGGSISELMKYYPNIKGINFDLPHVIATAPALDGVTHISGDIFESIPSADAVLMKGVLHCFSDEKCVKVLRNCRKAITDKKNGKIIILEIVLDPTSNQIFDETRMVYDLLIPLFSGGKERTELEWKRLLNEAGFTSIKITKIPIIPAIIEAFLV.

D219 provides a ligand contact to S-adenosyl-L-methionine. Catalysis depends on H257, which acts as the Proton acceptor.

Belongs to the class I-like SAM-binding methyltransferase superfamily. Cation-independent O-methyltransferase family. As to quaternary structure, homodimer. As to expression, highly expressed in lupulin glands. Detected in early-, mid- and late-stage cones.

Its subcellular location is the cytoplasm. The enzyme catalyses desmethylxanthohumol + S-adenosyl-L-methionine = xanthohumol + S-adenosyl-L-homocysteine + H(+). The catalysed reaction is xanthogalenol + S-adenosyl-L-methionine = 4'-O-methylxanthohumol + S-adenosyl-L-homocysteine + H(+). The protein operates within secondary metabolite biosynthesis. Inhibited by S-adenosyl homocysteine. Functionally, involved in the biosynthesis of prenylated phenolics natural products which contribute to the bitter taste of beer and display broad biological activities. Catalyzes the biosynthesis of xanthohumol. Methylates desmethylxanthohumol and xanthogalenol, but not caffeic acid, prenylflavanones, simple phenols or phenylpropanoids. This chain is Desmethylxanthohumol 6'-O-methyltransferase, found in Humulus lupulus (European hop).